Reading from the N-terminus, the 502-residue chain is Probable cytosol aminopeptidase (502 aa).

Mn(2+)-binding residues include Lys269 and Asp274. Lys281 is a catalytic residue. 3 residues coordinate Mn(2+): Asp292, Asp351, and Glu353. Arg355 is a catalytic residue.

It belongs to the peptidase M17 family. Mn(2+) serves as cofactor.

Its subcellular location is the cytoplasm. It catalyses the reaction Release of an N-terminal amino acid, Xaa-|-Yaa-, in which Xaa is preferably Leu, but may be other amino acids including Pro although not Arg or Lys, and Yaa may be Pro. Amino acid amides and methyl esters are also readily hydrolyzed, but rates on arylamides are exceedingly low.. The enzyme catalyses Release of an N-terminal amino acid, preferentially leucine, but not glutamic or aspartic acids.. Its function is as follows. Presumably involved in the processing and regular turnover of intracellular proteins. Catalyzes the removal of unsubstituted N-terminal amino acids from various peptides. The sequence is that of Probable cytosol aminopeptidase from Shewanella frigidimarina (strain NCIMB 400).